Here is a 210-residue protein sequence, read N- to C-terminus: Thymidylate kinase (210 aa).

Gly10–Ser17 is an ATP binding site.

Belongs to the thymidylate kinase family.

It carries out the reaction dTMP + ATP = dTDP + ADP. Phosphorylation of dTMP to form dTDP in both de novo and salvage pathways of dTTP synthesis. The chain is Thymidylate kinase from Pseudomonas fluorescens (strain ATCC BAA-477 / NRRL B-23932 / Pf-5).